Here is a 152-residue protein sequence, read N- to C-terminus: Dimethylsulfoniopropionate lyase DddW (152 aa).

Positions 69-124 (IAEFGPGHQLRPHRHTPPEFYLGLEGSGIVTIDGVPHEIRAGVALYIPGDAEHGTV) constitute a Cupin type-2 domain. 4 residues coordinate Fe cation: H83, E87, Y89, and H121.

It belongs to the non-heme iron-dependent dioxygenase family. Homodimer. Fe(2+) is required as a cofactor.

It catalyses the reaction S,S-dimethyl-beta-propiothetin = acrylate + dimethyl sulfide + H(+). Able to cleave dimethylsulfoniopropionate (DMSP), releasing dimethyl sulfide (DMS) and acrylate. DMS is the principal form by which sulfur is transported from oceans to the atmosphere. The protein is Dimethylsulfoniopropionate lyase DddW of Ruegeria pomeroyi (strain ATCC 700808 / DSM 15171 / DSS-3) (Silicibacter pomeroyi).